Here is a 148-residue protein sequence, read N- to C-terminus: Transcriptional regulator MraZ (148 aa).

SpoVT-AbrB domains follow at residues 5–51 (ATSL…PLPA) and 80–123 (AEDV…SMEA).

Belongs to the MraZ family. Forms oligomers.

It is found in the cytoplasm. The protein localises to the nucleoid. The chain is Transcriptional regulator MraZ from Methylobacillus flagellatus (strain ATCC 51484 / DSM 6875 / VKM B-1610 / KT).